The following is a 446-amino-acid chain: Packaging protein 1 (446 aa).

The interval 1–71 is disordered; the sequence is MEEKAGLGRL…QPQASKPKKH (71 aa). The segment covering 31–43 has biased composition (basic and acidic residues); sequence FHSDRNHPNKEAE. Position 170 to 177 (170 to 177) interacts with ATP; it reads GPTGCGKS. The DNA-binding stretch occupies residues 439 to 446; the sequence is RYYHSKKK.

The protein belongs to the adenoviridae packaging protein 1 family. In terms of assembly, homodimer. Part of a genome packaging complex composed of packaging proteins 1, 2 and 3; this complex specifically binds to the packaging sequence on the left end of viral genomic DNA and performs packaging of the viral genome. Interacts with protein 33K.

The protein resides in the virion. It localises to the host nucleus. The protein localises to the host nucleoplasm. It is found in the host nucleolus. Its function is as follows. Component of the packaging machinery which encapsidates the viral DNA into preformed capsids and transcriptional activator of the viral major late promoter (MLP). Binds, along with packaging proteins 2 and 3, to the specific packaging sequence on the left end of viral genomic DNA and displays ATPase activity thereby providing the power stroke of the packaging machinery. The activity of packaging protein IVa2 is stimulated by protein 33K which acts as a terminase. May be the protein that pumps DNA into the capsid powered by ATP hydrolysis. Specifically binds to the 5'-CG-3' nucleotides of the repeats making up the packaging sequence. Component of the DEF-A and DEF-B transcription factors that bind downstream elements of the major late promoter (MLP), and stimulate transcription from the MLP after initiation of viral DNA replication. DEF-A is a heterodimer packaging proteins 1 and 2 and DEF-B is a homodimer of packaging protein 1. The chain is Packaging protein 1 from Canine adenovirus serotype 2 (strain Toronto A 26-61) (CAdV-2).